A 77-amino-acid chain; its full sequence is Teretoxin Tsu15.4 (77 aa).

The first 21 residues, 1 to 21, serve as a signal peptide directing secretion; sequence MTKLTVLLLAILVLLPLATSN. A propeptide spanning residues 22 to 40 is cleaved from the precursor; it reads SAADEALASLSGLLRRAKR.

In terms of processing, contains 4 disulfide bonds. As to expression, expressed by the venom duct.

The protein resides in the secreted. The sequence is that of Teretoxin Tsu15.4 from Terebra subulata (Chocolate spotted auger).